The sequence spans 354 residues: Ferrochelatase (354 aa).

2 residues coordinate Fe cation: histidine 204 and glutamate 306.

This sequence belongs to the ferrochelatase family.

The protein localises to the cytoplasm. It carries out the reaction heme b + 2 H(+) = protoporphyrin IX + Fe(2+). Its pathway is porphyrin-containing compound metabolism; protoheme biosynthesis; protoheme from protoporphyrin-IX: step 1/1. Catalyzes the ferrous insertion into protoporphyrin IX. The polypeptide is Ferrochelatase (Coxiella burnetii (strain CbuK_Q154) (Coxiella burnetii (strain Q154))).